Consider the following 310-residue polypeptide: Mitochondrial citrate transporter F (310 aa).

Solcar repeat units follow at residues 23–108 (KKVH…LKNH), 115–207 (PPGL…FKRL), and 216–303 (DNMG…HKKL). 6 helical membrane-spanning segments follow: residues 29–49 (FWFG…LDLV), 85–105 (SAAI…YEEL), 122–142 (IGMA…ADVL), 186–206 (NSTR…TFKR), 222–242 (FTAS…VDVI), and 275–296 (AFRG…TFIF).

This sequence belongs to the mitochondrial carrier (TC 2.A.29) family.

It localises to the mitochondrion inner membrane. Its function is as follows. Mitochondrial transporter that does not mediate citrate export from mitochondria to cytoplasm. Its exact function has still to be determined. This chain is Mitochondrial citrate transporter F, found in Aspergillus niger (strain ATCC 1015 / CBS 113.46 / FGSC A1144 / LSHB Ac4 / NCTC 3858a / NRRL 328 / USDA 3528.7).